We begin with the raw amino-acid sequence, 276 residues long: Rhomboid protease GlpG (276 aa).

6 consecutive transmembrane segments (helical) span residues 94–114 (GPVT…MSLI), 142–162 (IFMH…WYLG), 169–189 (LGSG…GYVQ), 192–212 (FSGP…GYVW), 229–249 (LIIF…GMSM), and 250–270 (ANGA…VDTL). Ser201 acts as the Nucleophile in catalysis. His254 is an active-site residue.

This sequence belongs to the peptidase S54 family.

It is found in the cell inner membrane. The enzyme catalyses Cleaves type-1 transmembrane domains using a catalytic dyad composed of serine and histidine that are contributed by different transmembrane domains.. Its function is as follows. Rhomboid-type serine protease that catalyzes intramembrane proteolysis. The chain is Rhomboid protease GlpG from Salmonella typhi.